The following is a 70-amino-acid chain: Spore germination protein-like protein YpzD (70 aa).

This sequence belongs to the GerPA/GerPF family.

In Bacillus subtilis (strain 168), this protein is Spore germination protein-like protein YpzD (ypzD).